A 211-amino-acid chain; its full sequence is Protein-methionine-sulfoxide reductase heme-binding subunit MsrQ (211 aa).

Transmembrane regions (helical) follow at residues 8–28, 54–74, 82–102, 116–136, 153–173, and 178–198; these read VIWL…WLVW, FLLA…PLLI, LWCF…ELGV, PYLT…FTST, FVYL…KIIS, and IYAG…LSLF.

It belongs to the MsrQ family. Heterodimer of a catalytic subunit (MsrP) and a heme-binding subunit (MsrQ). FMN is required as a cofactor. The cofactor is heme b.

It is found in the cell inner membrane. Its function is as follows. Part of the MsrPQ system that repairs oxidized periplasmic proteins containing methionine sulfoxide residues (Met-O), using respiratory chain electrons. Thus protects these proteins from oxidative-stress damage caused by reactive species of oxygen and chlorine generated by the host defense mechanisms. MsrPQ is essential for the maintenance of envelope integrity under bleach stress, rescuing a wide series of structurally unrelated periplasmic proteins from methionine oxidation, including the primary periplasmic chaperone SurA and the lipoprotein Pal. MsrQ provides electrons for reduction to the reductase catalytic subunit MsrP, using the quinone pool of the respiratory chain. This Shigella flexneri protein is Protein-methionine-sulfoxide reductase heme-binding subunit MsrQ.